Here is a 137-residue protein sequence, read N- to C-terminus: uncharacterized protein (137 aa).

This is an uncharacterized protein from Mycoplasma genitalium (strain ATCC 33530 / DSM 19775 / NCTC 10195 / G37) (Mycoplasmoides genitalium).